We begin with the raw amino-acid sequence, 181 residues long: Translation initiation factor IF-3, chloroplastic (181 aa).

This sequence belongs to the IF-3 family. As to quaternary structure, monomer.

It is found in the plastid. The protein resides in the chloroplast. In terms of biological role, IF-3 binds to the 30S ribosomal subunit and shifts the equilibrium between 70S ribosomes and their 50S and 30S subunits in favor of the free subunits, thus enhancing the availability of 30S subunits on which protein synthesis initiation begins. This Galdieria sulphuraria (Red alga) protein is Translation initiation factor IF-3, chloroplastic.